The primary structure comprises 517 residues: Arp2/3 complex-activating protein rickA (517 aa).

Disordered regions lie at residues Leu313 to Ala441 and Lys461 to Arg517. Composition is skewed to pro residues over residues Pro319–Leu340 and Ser347–Ala378. The region spanning Asp406–Val423 is the WH2 domain. The central and acidic domains stretch occupies residues Val444–Asp477. The span at Ser463 to Ser479 shows a compositional bias: low complexity. A compositionally biased stretch (polar residues) spans Thr500–Arg517.

As to quaternary structure, homodimer.

Its subcellular location is the cell surface. In terms of biological role, recruits and activates the Arp2/3 complex, which in turn leads to actin polymerization, promoting Rickettsia motility during infection. The chain is Arp2/3 complex-activating protein rickA (rickA) from Rickettsia conorii (strain ATCC VR-613 / Malish 7).